Reading from the N-terminus, the 976-residue chain is R3H domain-containing protein 2 (976 aa).

2 disordered regions span residues 32–71 (ISKTPSKEEIEKECEDTSLRQETQRRTSNHGHARKRAKSN) and 105–147 (ISCP…QEYT). The span at 36–56 (PSKEEIEKECEDTSLRQETQR) shows a compositional bias: basic and acidic residues. Ser-37 bears the Phosphoserine mark. The segment covering 58-71 (TSNHGHARKRAKSN) has biased composition (basic residues). Over residues 109 to 143 (SDKEEEKSTKDVSEKEDKDKNKEKIPRKMLSRDSS) the composition is skewed to basic and acidic residues. Position 143 is a phosphoserine (Ser-143). The region spanning 169 to 232 (RMMLLKLEQE…AVIINKTSNT (64 aa)) is the R3H domain. The 78-residue stretch at 233 to 310 (RIPEQRFSEH…NREGLSRTSS (78 aa)) folds into the SUZ domain. Positions 257-269 (LKRDDASMDRDDN) are enriched in basic and acidic residues. Disordered stretches follow at residues 257–376 (LKRD…ISRP), 401–457 (CTAQ…EAAD), 480–560 (ASTG…PGLQ), 661–725 (GTSP…PSMV), and 738–780 (RGQK…SLSS). Residues 306-317 (SRTSSSRQSSTD) show a composition bias toward low complexity. Ser-330, Ser-333, and Ser-349 each carry phosphoserine. Over residues 401–415 (CTAQQQQQQQQQQLP) the composition is skewed to low complexity. Composition is skewed to polar residues over residues 441 to 453 (PFGQMSLSRQGST) and 480 to 504 (ASTGQPLPTSNYSTSSHAPPTQQVL). Residues 543–560 (SPQRGQQLPQPSQQPGLQ) are compositionally biased toward low complexity. Pro residues predominate over residues 682–691 (SPSPCSPPQM). Positions 692–714 (PQQYSGVSPSGPGVVVMQLNVPN) are enriched in low complexity. A compositionally biased stretch (polar residues) spans 748–758 (PDSSPQANTQM). A compositionally biased stretch (low complexity) spans 759–777 (SSSPVTSPTQSPAPSPVTS). Phosphoserine occurs at positions 853 and 855. Residues Thr-856 and Thr-860 each carry the phosphothreonine modification.

It is found in the nucleus. The polypeptide is R3H domain-containing protein 2 (R3HDM2) (Homo sapiens (Human)).